A 189-amino-acid chain; its full sequence is Elongation factor P (189 aa).

This sequence belongs to the elongation factor P family.

It localises to the cytoplasm. The protein operates within protein biosynthesis; polypeptide chain elongation. Involved in peptide bond synthesis. Stimulates efficient translation and peptide-bond synthesis on native or reconstituted 70S ribosomes in vitro. Probably functions indirectly by altering the affinity of the ribosome for aminoacyl-tRNA, thus increasing their reactivity as acceptors for peptidyl transferase. This chain is Elongation factor P, found in Chloroflexus aggregans (strain MD-66 / DSM 9485).